A 396-amino-acid polypeptide reads, in one-letter code: Tyrosine--tRNA ligase (396 aa).

The 'HIGH' region signature appears at 43 to 52 (PSSPDIHLGH). A 'KMSKS' region motif is present at residues 227 to 231 (KMSKS). An ATP-binding site is contributed by Lys230. In terms of domain architecture, S4 RNA-binding spans 338 to 396 (TGVIDFIILSGLAKSKSEARRLLEQGAVEINSEKISDQNTPVKCGDIIKAGKRRYSKAI).

It belongs to the class-I aminoacyl-tRNA synthetase family. TyrS type 2 subfamily. As to quaternary structure, homodimer.

The protein resides in the cytoplasm. It catalyses the reaction tRNA(Tyr) + L-tyrosine + ATP = L-tyrosyl-tRNA(Tyr) + AMP + diphosphate + H(+). In terms of biological role, catalyzes the attachment of tyrosine to tRNA(Tyr) in a two-step reaction: tyrosine is first activated by ATP to form Tyr-AMP and then transferred to the acceptor end of tRNA(Tyr). In Dehalococcoides mccartyi (strain CBDB1), this protein is Tyrosine--tRNA ligase.